The chain runs to 335 residues: UDP-N-acetylglucosamine--N-acetylmuramyl-(pentapeptide) pyrophosphoryl-undecaprenol N-acetylglucosamine transferase (335 aa).

UDP-N-acetyl-alpha-D-glucosamine is bound by residues 9-11, N123, S176, and Q274; that span reads TGG.

It belongs to the glycosyltransferase 28 family. MurG subfamily.

The protein localises to the cell inner membrane. It catalyses the reaction di-trans,octa-cis-undecaprenyl diphospho-N-acetyl-alpha-D-muramoyl-L-alanyl-D-glutamyl-meso-2,6-diaminopimeloyl-D-alanyl-D-alanine + UDP-N-acetyl-alpha-D-glucosamine = di-trans,octa-cis-undecaprenyl diphospho-[N-acetyl-alpha-D-glucosaminyl-(1-&gt;4)]-N-acetyl-alpha-D-muramoyl-L-alanyl-D-glutamyl-meso-2,6-diaminopimeloyl-D-alanyl-D-alanine + UDP + H(+). Its pathway is cell wall biogenesis; peptidoglycan biosynthesis. In terms of biological role, cell wall formation. Catalyzes the transfer of a GlcNAc subunit on undecaprenyl-pyrophosphoryl-MurNAc-pentapeptide (lipid intermediate I) to form undecaprenyl-pyrophosphoryl-MurNAc-(pentapeptide)GlcNAc (lipid intermediate II). The chain is UDP-N-acetylglucosamine--N-acetylmuramyl-(pentapeptide) pyrophosphoryl-undecaprenol N-acetylglucosamine transferase from Campylobacter fetus subsp. fetus (strain 82-40).